Reading from the N-terminus, the 610-residue chain is 6(G)-fructosyltransferase (610 aa).

Residues 1-20 lie on the Cytoplasmic side of the membrane; the sequence is MATSLQAPILGSRPPRRTLR. The chain crosses the membrane as a helical; Signal-anchor for type II membrane protein span at residues 21–38; the sequence is FLSFALFSALVLVVASFS. The Vacuolar portion of the chain corresponds to 39–610; that stretch reads SRKSESGSGL…NQYYPFTSSN (572 aa). Substrate contacts are provided by residues 79–82, Q98, W106, 141–142, and 207–208; these read YMND, WT, and RD. D82 is a catalytic residue. 3 N-linked (GlcNAc...) asparagine glycosylation sites follow: N215, N229, and N248. Residue E266 participates in substrate binding. Residue N459 is glycosylated (N-linked (GlcNAc...) asparagine). Cysteines 460 and 508 form a disulfide. N580 and N597 each carry an N-linked (GlcNAc...) asparagine glycan.

It belongs to the glycosyl hydrolase 32 family. In terms of processing, might be processed in two N-terminal and C-terminal proteolytic fragments.

The protein localises to the vacuole membrane. The catalysed reaction is [1-beta-D-fructofuranosyl-(2-&gt;1)-]m+1 alpha-D-glucopyranoside + [1-beta-D-fructofuranosyl-(2-&gt;1)-]n+1 alpha-D-glucopyranoside = [1-beta-D-fructofuranosyl-(2-&gt;1)-]m alpha-D-glucopyranoside + [1-beta-D-fructofuranosyl-(2-&gt;1)-]n+1 beta-D-fructofuranosyl-(2-&gt;6)-alpha-D-glucopyranoside (m &gt; 0, n &gt;= 0).. In terms of biological role, involved in the synthesis of fructan of the inulin neoseries. Has no 1-FFT activity. The polypeptide is 6(G)-fructosyltransferase (FT1) (Asparagus officinalis (Garden asparagus)).